The following is a 342-amino-acid chain: Autoinducer 2 import system permease protein LsrC (342 aa).

Topologically, residues 1 to 13 (MLKFIQNNREITA) are periplasmic. Residues 14 to 34 (LLAVVLLFVLPGFLDRQYLSV) form a helical membrane-spanning segment. Residues 35–38 (QTLT) lie on the Cytoplasmic side of the membrane. A helical transmembrane segment spans residues 39-59 (MVYSSAQILILLAMGATLVML). Over 60-69 (TRNIDVSVGS) the chain is Periplasmic. The helical transmembrane segment at 70 to 90 (ITGMCAVLLGMLLNAGYSLPV) threads the bilayer. Residues 91–92 (AC) are Cytoplasmic-facing. A helical membrane pass occupies residues 93–113 (VATLLLGLLAGFFNGVLVAWL). Lys114 is a topological domain (periplasmic). Residues 115–135 (IPAIVATLGTLGLYRGIMLLW) form a helical membrane-spanning segment. Topologically, residues 136-154 (TGGKWIEGLPAELKQLSAP) are cytoplasmic. Residues 155-175 (LLLGVSAIGWLTIILVAFMAW) form a helical membrane-spanning segment. The Periplasmic portion of the chain corresponds to 176-212 (LLAKTAFGRSFYATGDNLQGARQLGVRTEAIRIVAFS). A helical membrane pass occupies residues 213-233 (LNGCMAALAGIVFASQIGFIP). Topologically, residues 234–251 (NQTGTGLEMKAIAACVLG) are cytoplasmic. Residues 252–272 (GISLLGGSGAIIGAVLGAWFL) traverse the membrane as a helical segment. The Periplasmic segment spans residues 273 to 283 (TQIDSVLVLLR). The chain crosses the membrane as a helical span at residues 284–304 (IPAWWNDFIAGLVLLAVLVFD). Topologically, residues 305 to 342 (GRLRCALERNLRRQKYARFMTPPPSVKPASSGKKREAA) are cytoplasmic.

The protein belongs to the binding-protein-dependent transport system permease family. AraH/RbsC subfamily. As to quaternary structure, the complex is composed of two ATP-binding proteins (LsrA), two transmembrane proteins (LsrC and LsrD) and a solute-binding protein (LsrB).

It is found in the cell inner membrane. Its function is as follows. Part of the ABC transporter complex LsrABCD involved in autoinducer 2 (AI-2) import. Probably responsible for the translocation of the substrate across the membrane. The polypeptide is Autoinducer 2 import system permease protein LsrC (lsrC) (Escherichia coli (strain K12 / DH10B)).